The primary structure comprises 527 residues: Triostin synthetase I (527 aa).

Residue 187-188 (GG) coordinates ATP. Substrate is bound at residue 230 to 231 (HQ). Residues 300-302 (SAP), Asp406, Arg421, and Lys512 contribute to the ATP site. Lys512 is a binding site for substrate.

It belongs to the ATP-dependent AMP-binding enzyme family. In terms of assembly, monomer.

Its function is as follows. Involved in triostin biosynthesis. Activates quinoxaline-2-carboxylic acid (QA) via catalysis of the ATP-pyrophosphate exchange reaction dependent on QA, and the formation of the corresponding adenylate. Also activates structural analogs of QA such as quinoline-2-carboxylic acid and thieno[3,2-b]pyridine-5-carboxylic acid, but not quinoline-3-carboxylic acid, quinoline-4-carboxylic acid, pyridine-2-carboxylic acid or 2-pyrazinecarboxylic acid. The sequence is that of Triostin synthetase I (trsA) from Streptomyces triostinicus.